A 250-amino-acid polypeptide reads, in one-letter code: Aquaporin TIP2-2 (250 aa).

The next 2 membrane-spanning stretches (helical) occupy residues 22–42 (VAEF…AIAF) and 54–74 (AGLV…VSVA). The short motif at 83–85 (NPA) is the NPA 1 element. The next 3 helical transmembrane spans lie at 97-119 (TVLT…CLLL), 142-162 (GVVF…ATAA), and 169-189 (LGTI…LAAG). The NPA 2 signature appears at 197-199 (NPA). Residues 218–238 (WVGPLIGGGLAGLVYGDVFIG) form a helical membrane-spanning segment.

Belongs to the MIP/aquaporin (TC 1.A.8) family. TIP (TC 1.A.8.10) subfamily.

The protein localises to the vacuole membrane. Functionally, aquaporins facilitate the transport of water and small neutral solutes across cell membranes. This is Aquaporin TIP2-2 (TIP2-2) from Zea mays (Maize).